We begin with the raw amino-acid sequence, 193 residues long: Ribosomal RNA large subunit methyltransferase E (193 aa).

5 residues coordinate S-adenosyl-L-methionine: glycine 48, phenylalanine 50, aspartate 67, asparagine 85, and aspartate 107. The Proton acceptor role is filled by lysine 147.

Belongs to the class I-like SAM-binding methyltransferase superfamily. RNA methyltransferase RlmE family.

The protein resides in the cytoplasm. The enzyme catalyses uridine(2552) in 23S rRNA + S-adenosyl-L-methionine = 2'-O-methyluridine(2552) in 23S rRNA + S-adenosyl-L-homocysteine + H(+). Functionally, specifically methylates the uridine in position 2552 of 23S rRNA at the 2'-O position of the ribose in the fully assembled 50S ribosomal subunit. In Borrelia duttonii (strain Ly), this protein is Ribosomal RNA large subunit methyltransferase E.